The sequence spans 104 residues: Ribonuclease P protein component 4 (104 aa).

Residues Cys57, Cys60, Cys83, and Cys86 each contribute to the Zn(2+) site.

The protein belongs to the eukaryotic/archaeal RNase P protein component 4 family. Consists of a catalytic RNA component and at least 4-5 protein subunits. Zn(2+) is required as a cofactor.

It localises to the cytoplasm. The catalysed reaction is Endonucleolytic cleavage of RNA, removing 5'-extranucleotides from tRNA precursor.. Part of ribonuclease P, a protein complex that generates mature tRNA molecules by cleaving their 5'-ends. This chain is Ribonuclease P protein component 4, found in Saccharolobus islandicus (strain M.16.27) (Sulfolobus islandicus).